The primary structure comprises 299 residues: Acetylglutamate kinase (299 aa).

Residues 70 to 71, R92, and N197 contribute to the substrate site; that span reads GG.

It belongs to the acetylglutamate kinase family. ArgB subfamily.

It localises to the cytoplasm. The catalysed reaction is N-acetyl-L-glutamate + ATP = N-acetyl-L-glutamyl 5-phosphate + ADP. It functions in the pathway amino-acid biosynthesis; L-arginine biosynthesis; N(2)-acetyl-L-ornithine from L-glutamate: step 2/4. Functionally, catalyzes the ATP-dependent phosphorylation of N-acetyl-L-glutamate. The chain is Acetylglutamate kinase from Acidiphilium cryptum (strain JF-5).